The primary structure comprises 282 residues: DNA-dependent metalloprotease WSS1 homolog 2 (282 aa).

The Ubiquitin-like domain occupies 1–75; it reads MELKFSCRGN…CLIRQDKDIV (75 aa). In terms of domain architecture, WLM spans 99 to 274; the sequence is PHTTPKPASI…LLAAAERRKQ (176 aa). His-202 provides a ligand contact to Zn(2+). Glu-203 is a catalytic residue. 2 residues coordinate Zn(2+): His-206 and His-212. A disordered region spans residues 234–282; the sequence is GKPGSYVSDRASYTPQQDNDDEDQKNHRRDLLLAAAERRKQSGSKVQKE. Over residues 269–282 the composition is skewed to basic and acidic residues; the sequence is AERRKQSGSKVQKE.

Belongs to the peptidase M3 family. WSS1-like metalloprotease (WLM) subfamily. Zn(2+) serves as cofactor.

It localises to the cytoplasm. It is found in the nucleus. In terms of biological role, metalloendopeptidase that acts selectively on DNA-binding proteins. DNA is needed to bring the protease and substrates together to enable proteolysis. Involved in the repair of toxic DNA-protein cross-links (DPCs) such as covalently trapped topoisomerase 1 (TOP1) adducts on DNA lesions or DPCs induced by reactive compounds such as formaldehyde. This is DNA-dependent metalloprotease WSS1 homolog 2 from Schizosaccharomyces pombe (strain 972 / ATCC 24843) (Fission yeast).